The chain runs to 95 residues: Turripeptide OL184 (95 aa).

In terms of processing, contains 5 disulfide bonds. In terms of tissue distribution, expressed by the venom duct.

The protein localises to the secreted. Acts as a neurotoxin by inhibiting an ion channel. This Iotyrris olangoensis (Sea snail) protein is Turripeptide OL184.